Reading from the N-terminus, the 691-residue chain is Capsid-associated protein VP80 (691 aa).

The segment at 416 to 466 (SPVRKTSGKRSAEDDLLPTRSSKRANRPEINVISSEDEQEDDDVEDVDYEK) is disordered. Residues 450-464 (SEDEQEDDDVEDVDY) are compositionally biased toward acidic residues.

In terms of assembly, homodimer. Interacts with host nuclear F-actin.

The protein localises to the host nucleus. The protein resides in the virion. Structural protein that plays a role in the packaging of nucleocapsids and in their egress from the nucleus toward the cell periphery. This chain is Capsid-associated protein VP80 (VP80), found in Autographa californica nuclear polyhedrosis virus (AcMNPV).